The sequence spans 380 residues: Cytochrome b (380 aa).

Helical transmembrane passes span 34–54 (FGSL…LLAA), 78–99 (WLIR…YLHI), 114–134 (WNTG…GYVL), and 179–199 (FFTL…IHLT). Heme b-binding residues include H84 and H98. 2 residues coordinate heme b: H183 and H197. H202 is a binding site for a ubiquinone. Transmembrane regions (helical) follow at residues 227 to 247 (LKDI…ALFS), 289 to 309 (LGGV…PLLH), 321 to 341 (FSQL…WVGS), and 348 to 368 (FIII…ILFP).

Belongs to the cytochrome b family. As to quaternary structure, the cytochrome bc1 complex contains 11 subunits: 3 respiratory subunits (MT-CYB, CYC1 and UQCRFS1), 2 core proteins (UQCRC1 and UQCRC2) and 6 low-molecular weight proteins (UQCRH/QCR6, UQCRB/QCR7, UQCRQ/QCR8, UQCR10/QCR9, UQCR11/QCR10 and a cleavage product of UQCRFS1). This cytochrome bc1 complex then forms a dimer. Heme b serves as cofactor.

It is found in the mitochondrion inner membrane. Its function is as follows. Component of the ubiquinol-cytochrome c reductase complex (complex III or cytochrome b-c1 complex) that is part of the mitochondrial respiratory chain. The b-c1 complex mediates electron transfer from ubiquinol to cytochrome c. Contributes to the generation of a proton gradient across the mitochondrial membrane that is then used for ATP synthesis. This chain is Cytochrome b (MT-CYB), found in Antigone rubicunda (Brolga crane).